We begin with the raw amino-acid sequence, 443 residues long: Probable lysophospholipase BODYGUARD 5 (443 aa).

Residues 1 to 52 (MITSSFSEKCTSVINGAPSWAVFFLFDLLDYFLCIVFRFLDEVMEEKSESCH) form the signal peptide. Residue Cys-53 is the site of N-palmitoyl cysteine attachment. Residues 163–268 (VIFVHGFLAS…VKSVALVAPP (106 aa)) enclose the AB hydrolase-1 domain. Residue His-167 is part of the active site. The Nucleophile role is filled by Ser-242. Residues Asp-387 and His-415 each act as charge relay system in the active site.

The protein resides in the cell membrane. The protein localises to the secreted. Its subcellular location is the cell wall. Its function is as follows. Involved in cuticle development and morphogenesis. In Arabidopsis thaliana (Mouse-ear cress), this protein is Probable lysophospholipase BODYGUARD 5.